A 347-amino-acid polypeptide reads, in one-letter code: GMP reductase (347 aa).

An NADP(+)-binding site is contributed by 108-131 (ADFEKTKQILDLNPALNFVCIDVA). Positions 181 and 183 each coordinate K(+). The Thioimidate intermediate role is filled by cysteine 186. 216 to 239 (IVSDGGCTTPGDVAKAFGGGADFV) is an NADP(+) binding site.

This sequence belongs to the IMPDH/GMPR family. GuaC type 1 subfamily. As to quaternary structure, homotetramer.

It carries out the reaction IMP + NH4(+) + NADP(+) = GMP + NADPH + 2 H(+). In terms of biological role, catalyzes the irreversible NADPH-dependent deamination of GMP to IMP. It functions in the conversion of nucleobase, nucleoside and nucleotide derivatives of G to A nucleotides, and in maintaining the intracellular balance of A and G nucleotides. The polypeptide is GMP reductase (Escherichia coli O139:H28 (strain E24377A / ETEC)).